A 671-amino-acid polypeptide reads, in one-letter code: UvrABC system protein B (671 aa).

The region spanning 25 to 412 (EGIEAGLSHQ…AGRVVEQVVR (388 aa)) is the Helicase ATP-binding domain. 38-45 (GVTGSGKT) lines the ATP pocket. Residues 91 to 114 (YYDYYQPEAYVPSSDTFIEKDASI) carry the Beta-hairpin motif. Residues 429-582 (QVDDLLSEIR…QIAFNEANGI (154 aa)) enclose the Helicase C-terminal domain. Positions 632–667 (TKRIKQLEEKMMQFARDLEFEAAAQLRDEIAQLRER) constitute a UVR domain.

The protein belongs to the UvrB family. As to quaternary structure, forms a heterotetramer with UvrA during the search for lesions. Interacts with UvrC in an incision complex.

It is found in the cytoplasm. The UvrABC repair system catalyzes the recognition and processing of DNA lesions. A damage recognition complex composed of 2 UvrA and 2 UvrB subunits scans DNA for abnormalities. Upon binding of the UvrA(2)B(2) complex to a putative damaged site, the DNA wraps around one UvrB monomer. DNA wrap is dependent on ATP binding by UvrB and probably causes local melting of the DNA helix, facilitating insertion of UvrB beta-hairpin between the DNA strands. Then UvrB probes one DNA strand for the presence of a lesion. If a lesion is found the UvrA subunits dissociate and the UvrB-DNA preincision complex is formed. This complex is subsequently bound by UvrC and the second UvrB is released. If no lesion is found, the DNA wraps around the other UvrB subunit that will check the other stand for damage. The protein is UvrABC system protein B of Pseudomonas putida (strain ATCC 47054 / DSM 6125 / CFBP 8728 / NCIMB 11950 / KT2440).